A 175-amino-acid chain; its full sequence is Large ribosomal subunit protein uL5 (175 aa).

It belongs to the universal ribosomal protein uL5 family. In terms of assembly, part of the 50S ribosomal subunit; contacts the 5S rRNA and probably tRNA. Forms a bridge to the 30S subunit in the 70S ribosome.

In terms of biological role, this is one of the proteins that bind and probably mediate the attachment of the 5S RNA into the large ribosomal subunit, where it forms part of the central protuberance. In the 70S ribosome it contacts protein S13 of the 30S subunit (bridge B1b), connecting the 2 subunits; this bridge is implicated in subunit movement. May contact the P site tRNA; the 5S rRNA and some of its associated proteins might help stabilize positioning of ribosome-bound tRNAs. The protein is Large ribosomal subunit protein uL5 of Halobacterium salinarum (strain ATCC 29341 / DSM 671 / R1).